The primary structure comprises 457 residues: Bifunctional protein GlmU (457 aa).

The pyrophosphorylase stretch occupies residues 1 to 228 (MEELVSVILA…SEEIIGVNSR (228 aa)). UDP-N-acetyl-alpha-D-glucosamine is bound by residues 9 to 12 (LAAG), K23, Q73, and 78 to 79 (GT). D102 lines the Mg(2+) pocket. G139, E154, N169, and N226 together coordinate UDP-N-acetyl-alpha-D-glucosamine. N226 lines the Mg(2+) pocket. The linker stretch occupies residues 229-249 (VQLSNAEKVMRRRINEKHMEN). Residues 250–457 (GVTIIDPDST…VEERIKKGRL (208 aa)) are N-acetyltransferase. The UDP-N-acetyl-alpha-D-glucosamine site is built by R331 and K349. H361 acts as the Proton acceptor in catalysis. UDP-N-acetyl-alpha-D-glucosamine contacts are provided by Y364 and N375. Residues 384–385 (NY), A421, and R438 contribute to the acetyl-CoA site.

This sequence in the N-terminal section; belongs to the N-acetylglucosamine-1-phosphate uridyltransferase family. In the C-terminal section; belongs to the transferase hexapeptide repeat family. In terms of assembly, homotrimer. The cofactor is Mg(2+).

Its subcellular location is the cytoplasm. The catalysed reaction is alpha-D-glucosamine 1-phosphate + acetyl-CoA = N-acetyl-alpha-D-glucosamine 1-phosphate + CoA + H(+). It catalyses the reaction N-acetyl-alpha-D-glucosamine 1-phosphate + UTP + H(+) = UDP-N-acetyl-alpha-D-glucosamine + diphosphate. The protein operates within nucleotide-sugar biosynthesis; UDP-N-acetyl-alpha-D-glucosamine biosynthesis; N-acetyl-alpha-D-glucosamine 1-phosphate from alpha-D-glucosamine 6-phosphate (route II): step 2/2. Its pathway is nucleotide-sugar biosynthesis; UDP-N-acetyl-alpha-D-glucosamine biosynthesis; UDP-N-acetyl-alpha-D-glucosamine from N-acetyl-alpha-D-glucosamine 1-phosphate: step 1/1. It participates in bacterial outer membrane biogenesis; LPS lipid A biosynthesis. Functionally, catalyzes the last two sequential reactions in the de novo biosynthetic pathway for UDP-N-acetylglucosamine (UDP-GlcNAc). The C-terminal domain catalyzes the transfer of acetyl group from acetyl coenzyme A to glucosamine-1-phosphate (GlcN-1-P) to produce N-acetylglucosamine-1-phosphate (GlcNAc-1-P), which is converted into UDP-GlcNAc by the transfer of uridine 5-monophosphate (from uridine 5-triphosphate), a reaction catalyzed by the N-terminal domain. The protein is Bifunctional protein GlmU of Caldanaerobacter subterraneus subsp. tengcongensis (strain DSM 15242 / JCM 11007 / NBRC 100824 / MB4) (Thermoanaerobacter tengcongensis).